Reading from the N-terminus, the 217-residue chain is MATGSRTSLLLAFTLLCLPQLKEAGAFPTIPLSRLLDNAMLRAHRLHQLAFDTYQEFEEAYIPKEQKYSFLQNPQTSLCFSESIPTPASKKETQQKSNLELLRISLILIQSWFEPVQLLRSVFANSLLYGVSDSDVYEYLKDLEEGIQTLMERLEDGSPRTGAIFRQTYSKFDINSQNDDALLKNYGLLYCFRKDMDKVETFLRIVQCRSVEGSCGF.

The N-terminal stretch at 1–26 is a signal peptide; sequence MATGSRTSLLLAFTLLCLPQLKEAGA. Zn(2+) is bound at residue His-44. Cys-79 and Cys-191 are disulfide-bonded. Ser-132 carries the post-translational modification Phosphoserine. Residue Glu-200 coordinates Zn(2+). Cys-208 and Cys-215 are oxidised to a cystine.

Belongs to the somatotropin/prolactin family.

It is found in the secreted. In terms of biological role, plays an important role in growth control. Its major role in stimulating body growth is to stimulate the liver and other tissues to secrete IGF1. It stimulates both the differentiation and proliferation of myoblasts. It also stimulates amino acid uptake and protein synthesis in muscle and other tissues. This Saimiri boliviensis boliviensis (Bolivian squirrel monkey) protein is Somatotropin (GH1).